The following is a 133-amino-acid chain: Ribosome-binding factor A (133 aa).

The protein belongs to the RbfA family. As to quaternary structure, monomer. Binds 30S ribosomal subunits, but not 50S ribosomal subunits or 70S ribosomes.

The protein resides in the cytoplasm. Its function is as follows. One of several proteins that assist in the late maturation steps of the functional core of the 30S ribosomal subunit. Associates with free 30S ribosomal subunits (but not with 30S subunits that are part of 70S ribosomes or polysomes). Required for efficient processing of 16S rRNA. May interact with the 5'-terminal helix region of 16S rRNA. The sequence is that of Ribosome-binding factor A from Salmonella typhi.